An 82-amino-acid polypeptide reads, in one-letter code: MPKRVLQGVVVSDKQDKTVVVRVERRFTHPLLKKTVRRSKKYHAHDEANTWSIGDTVWIEEHRPLSKLKNWIVVQGEKRAEV.

Belongs to the universal ribosomal protein uS17 family. Part of the 30S ribosomal subunit.

One of the primary rRNA binding proteins, it binds specifically to the 5'-end of 16S ribosomal RNA. This Azorhizobium caulinodans (strain ATCC 43989 / DSM 5975 / JCM 20966 / LMG 6465 / NBRC 14845 / NCIMB 13405 / ORS 571) protein is Small ribosomal subunit protein uS17.